The primary structure comprises 239 residues: Uracil-DNA glycosylase (239 aa).

Catalysis depends on Asp-65, which acts as the Proton acceptor.

The protein belongs to the uracil-DNA glycosylase (UDG) superfamily. UNG family.

The protein resides in the cytoplasm. The enzyme catalyses Hydrolyzes single-stranded DNA or mismatched double-stranded DNA and polynucleotides, releasing free uracil.. In terms of biological role, excises uracil residues from the DNA which can arise as a result of misincorporation of dUMP residues by DNA polymerase or due to deamination of cytosine. In Levilactobacillus brevis (strain ATCC 367 / BCRC 12310 / CIP 105137 / JCM 1170 / LMG 11437 / NCIMB 947 / NCTC 947) (Lactobacillus brevis), this protein is Uracil-DNA glycosylase.